The primary structure comprises 469 residues: Abscisic acid 8'-hydroxylase CYP707A2 (469 aa).

The helical transmembrane segment at 3-23 (FVSMLCLFTFISLTLLLIHSI) threads the bilayer. Residue Cys-414 coordinates heme.

The protein belongs to the cytochrome P450 family. It depends on heme as a cofactor. As to expression, expressed at low levels in fruit.

Its subcellular location is the membrane. The enzyme catalyses 2-cis-(+)-abscisate + reduced [NADPH--hemoprotein reductase] + O2 = (+)-8'-hydroxyabscisate + oxidized [NADPH--hemoprotein reductase] + H2O + H(+). The protein operates within plant hormone degradation; abscisic acid degradation. Negative regulator of fruit ripening involved in the oxidative degradation of abscisic acid (ABA). In Solanum lycopersicum (Tomato), this protein is Abscisic acid 8'-hydroxylase CYP707A2.